The sequence spans 113 residues: uncharacterized protein (113 aa).

A signal peptide spans 1–29 (MLVVYMCIWVLYLLLFLFLFLFIASPASL). Transmembrane regions (helical) follow at residues 34-54 (THIL…CAFF) and 56-76 (QVLC…FYFF).

Its subcellular location is the membrane. This is an uncharacterized protein from Saccharomyces cerevisiae (strain ATCC 204508 / S288c) (Baker's yeast).